The following is a 318-amino-acid chain: Decaprenyl-phosphate phosphoribosyltransferase (318 aa).

The next 2 helical transmembrane spans lie at 33–53 (WIKN…GIEY) and 59–79 (AAKV…IYLI). Positions 35 and 77 each coordinate 5-phospho-alpha-D-ribose 1-diphosphate. Mg(2+) contacts are provided by Asn80 and Asp84. Lys94 is a 5-phospho-alpha-D-ribose 1-diphosphate binding site. The next 2 helical transmembrane spans lie at 99–119 (IAAG…LAVA) and 121–141 (LVIS…YIAV). 5-phospho-alpha-D-ribose 1-diphosphate is bound by residues Lys150 and Arg167. 2 helical membrane-spanning segments follow: residues 153–173 (AVLD…AGGV) and 177–197 (IPLS…MAAG). Lys198 lines the trans,octa-cis-decaprenyl phosphate pocket. Transmembrane regions (helical) follow at residues 225 to 245 (LRFV…LWAF), 262 to 282 (SWYA…AVDI), and 298 to 318 (RVLQ…IYFS).

Belongs to the UbiA prenyltransferase family. DPPR synthase subfamily. Mg(2+) serves as cofactor.

Its subcellular location is the cell inner membrane. It carries out the reaction trans,octa-cis-decaprenyl phosphate + 5-phospho-alpha-D-ribose 1-diphosphate + H(+) = trans,octa-cis-decaprenylphospho-beta-D-ribofuranose 5-phosphate + diphosphate. The protein operates within cell wall biogenesis; cell wall polysaccharide biosynthesis. Its function is as follows. Involved in the biosynthesis of decaprenylphosphoryl arabinose (DPA) a precursor for arabinan synthesis in mycobacterial cell wall biosynthesis. Catalyzes the transfer of a 5-phosphoribosyl residue from phosphoribose diphosphate (PRPP) to decaprenyl phosphate (DP) to form decaprenylphosphoryl-5-phosphoribose (DPPR). The sequence is that of Decaprenyl-phosphate phosphoribosyltransferase from Mycolicibacterium smegmatis (strain ATCC 700084 / mc(2)155) (Mycobacterium smegmatis).